The primary structure comprises 684 residues: 77 kDa membrane protein (684 aa).

The signal sequence occupies residues 1 to 30 (MKFKSLITTTLALGVLASTGANFNNNEASA). 6 MAP repeats span residues 45 to 154 (GYSK…EDKK), 156 to 265 (DKAN…ENKA), 266 to 374 (KRNY…KADR), 375 to 474 (YVPY…TGTK), 475 to 584 (AKAD…KKNN), and 586 to 684 (SNNV…ELKF).

The protein resides in the cell membrane. Functionally, binds various plasma and ECM-proteins. This is 77 kDa membrane protein from Staphylococcus aureus (strain COL).